The primary structure comprises 103 residues: Large ribosomal subunit protein bL21 (103 aa).

The protein belongs to the bacterial ribosomal protein bL21 family. As to quaternary structure, part of the 50S ribosomal subunit. Contacts protein L20.

Functionally, this protein binds to 23S rRNA in the presence of protein L20. This Shewanella putrefaciens (strain CN-32 / ATCC BAA-453) protein is Large ribosomal subunit protein bL21.